The primary structure comprises 131 residues: uncharacterized protein (131 aa).

This is an uncharacterized protein from Schizosaccharomyces pombe (strain 972 / ATCC 24843) (Fission yeast).